A 273-amino-acid polypeptide reads, in one-letter code: Glucosamine-6-phosphate deaminase (273 aa).

Asp72 functions as the Proton acceptor; for enolization step in the catalytic mechanism. Catalysis depends on Asp141, which acts as the For ring-opening step. His143 (proton acceptor; for ring-opening step) is an active-site residue. The active-site For ring-opening step is the Glu148.

This sequence belongs to the glucosamine/galactosamine-6-phosphate isomerase family. Homohexamer.

The protein localises to the cytoplasm. The enzyme catalyses alpha-D-glucosamine 6-phosphate + H2O = beta-D-fructose 6-phosphate + NH4(+). It participates in nucleotide-sugar biosynthesis; UDP-N-acetyl-alpha-D-glucosamine biosynthesis; alpha-D-glucosamine 6-phosphate from D-fructose 6-phosphate: step 1/1. Its function is as follows. Catalyzes the reversible conversion of alpha-D-glucosamine 6-phosphate (GlcN-6P) into beta-D-fructose 6-phosphate (Fru-6P) and ammonium ion, a regulatory reaction step in de novo uridine diphosphate-N-acetyl-alpha-D-glucosamine (UDP-GlcNAc) biosynthesis via hexosamine pathway. This is Glucosamine-6-phosphate deaminase (Gnpda1) from Anopheles gambiae (African malaria mosquito).